Reading from the N-terminus, the 1465-residue chain is DNA polymerase III PolC-type (1465 aa).

An Exonuclease domain is found at 427 to 583 (YVVFDVETTG…YDAEATGRLL (157 aa)).

It belongs to the DNA polymerase type-C family. PolC subfamily.

It is found in the cytoplasm. The enzyme catalyses DNA(n) + a 2'-deoxyribonucleoside 5'-triphosphate = DNA(n+1) + diphosphate. Its function is as follows. Required for replicative DNA synthesis. This DNA polymerase also exhibits 3' to 5' exonuclease activity. In Streptococcus pyogenes serotype M18 (strain MGAS8232), this protein is DNA polymerase III PolC-type.